The following is a 526-amino-acid chain: Peptide chain release factor 3 (526 aa).

The 270-residue stretch at 8 to 277 folds into the tr-type G domain; it reads GKRRTFAIIS…GLTDWAPAPQ (270 aa). GTP is bound by residues 17-24, 85-89, and 139-142; these read SHPDAGKT, DTPGH, and NKLD.

The protein belongs to the TRAFAC class translation factor GTPase superfamily. Classic translation factor GTPase family. PrfC subfamily.

It is found in the cytoplasm. Increases the formation of ribosomal termination complexes and stimulates activities of RF-1 and RF-2. It binds guanine nucleotides and has strong preference for UGA stop codons. It may interact directly with the ribosome. The stimulation of RF-1 and RF-2 is significantly reduced by GTP and GDP, but not by GMP. The sequence is that of Peptide chain release factor 3 from Aliivibrio fischeri (strain MJ11) (Vibrio fischeri).